A 415-amino-acid chain; its full sequence is SVF1-like protein YDR222W (415 aa).

This sequence belongs to the SVF1 family.

Its subcellular location is the cytoplasm. The protein is SVF1-like protein YDR222W of Saccharomyces cerevisiae (strain ATCC 204508 / S288c) (Baker's yeast).